We begin with the raw amino-acid sequence, 251 residues long: Xylose/arabinose import ATP-binding protein XylG (251 aa).

Positions 5–241 constitute an ABC transporter domain; that stretch reads LEIRDVHKSF…EITEVMTSFA (237 aa). Residue 37-44 participates in ATP binding; the sequence is GDNGAGKS.

The protein belongs to the ABC transporter superfamily. As to quaternary structure, the complex is composed of two ATP-binding proteins (XylG), two transmembrane proteins (XylH) and a solute-binding protein (XylF).

It localises to the cell membrane. It carries out the reaction D-xylose(out) + ATP + H2O = D-xylose(in) + ADP + phosphate + H(+). The catalysed reaction is L-arabinose(out) + ATP + H2O = L-arabinose(in) + ADP + phosphate + H(+). In terms of biological role, part of the ABC transporter complex XylFGH involved in the uptake of xylose and arabinose. Responsible for energy coupling to the transport system. The protein is Xylose/arabinose import ATP-binding protein XylG of Sulfolobus acidocaldarius (strain ATCC 33909 / DSM 639 / JCM 8929 / NBRC 15157 / NCIMB 11770).